The following is a 200-amino-acid chain: Ras-related protein RABF2a (200 aa).

GTP is bound at residue 17–25 (GDVGAGKSS). Residues 39 to 47 (QESTIGAAF) carry the Effector region motif. GTP contacts are provided by residues 65–69 (DTAGQ), 123–126 (NKAD), and 153–154 (SA). 2 S-geranylgeranyl cysteine lipidation sites follow: Cys-198 and Cys-199.

This sequence belongs to the small GTPase superfamily. Rab family. In terms of assembly, interacts with VPS9A. Interacts with EREX (via PX domain). Binds to VPS3. As to expression, high in stem, root, and inflorescence.

It is found in the endosome membrane. The protein resides in the prevacuolar compartment membrane. Involved in the trafficking of soluble cargo proteins from the prevacuolar compartment to the central vacuole. Involved in vacuolar transport of storage proteins with EREX as effector. Regulates membrane trafficking to protein storage vacuoles (PSVs). The sequence is that of Ras-related protein RABF2a (RABF2A) from Arabidopsis thaliana (Mouse-ear cress).